Here is an 87-residue protein sequence, read N- to C-terminus: Small ribosomal subunit protein uS15 (87 aa).

This sequence belongs to the universal ribosomal protein uS15 family. Part of the 30S ribosomal subunit. Forms a bridge to the 50S subunit in the 70S ribosome, contacting the 23S rRNA.

In terms of biological role, one of the primary rRNA binding proteins, it binds directly to 16S rRNA where it helps nucleate assembly of the platform of the 30S subunit by binding and bridging several RNA helices of the 16S rRNA. Its function is as follows. Forms an intersubunit bridge (bridge B4) with the 23S rRNA of the 50S subunit in the ribosome. This chain is Small ribosomal subunit protein uS15, found in Clostridium perfringens (strain ATCC 13124 / DSM 756 / JCM 1290 / NCIMB 6125 / NCTC 8237 / Type A).